The primary structure comprises 159 residues: IQ domain-containing protein J (159 aa).

In terms of domain architecture, IQ spans 47–67 (ESKVKIIQRAWREYLQRQEPL). The interval 63-88 (RQEPLGKRSPSPPSVSSEKLSSSVSM) is disordered. Residues 76–87 (SVSSEKLSSSVS) are compositionally biased toward low complexity.

The chain is IQ domain-containing protein J from Homo sapiens (Human).